The following is a 469-amino-acid chain: Zinc transporter SLC39A7 (469 aa).

The helical transmembrane segment at 10 to 30 (WVAVGLLTWATLGLLVAELGG) threads the bilayer. 2 stretches are compositionally biased toward basic and acidic residues: residues 42 to 56 (FHGH…DFHH) and 66 to 114 (HTHE…EHSR). A disordered region spans residues 42 to 121 (FHGHSHRHSH…HSRGGYGESG (80 aa)). Pros-methylhistidine is present on His66. 3 consecutive transmembrane segments (helical) span residues 138–158 (ALGA…LIPV), 169–189 (LQIL…LHLI), and 214–234 (GPIL…LVVE). Residues 242–263 (GGHGHSHGHGHAHSHTHGSHGH) are compositionally biased toward basic residues. The interval 242-310 (GGHGHSHGHG…VRPQNAEEEK (69 aa)) is disordered. A compositionally biased stretch (basic and acidic residues) spans 264–285 (GRQECSTKEKQSSEEEEKETRG). A phosphoserine mark is found at Ser275 and Ser276. 3 helical membrane passes run 386-406 (LTAV…GGAV), 410-430 (IAGG…FIYV), and 448-468 (SLLE…IAHL).

This sequence belongs to the ZIP transporter (TC 2.A.5) family. KE4/Catsup subfamily. Homodimer. Post-translationally, methylation at some His residue by METTL9 leads to reduced zinc-binding. Rapidly phosphorylated by CK2 following Zn(2+) treatment. This phosphorylation is required for efficient cytosolic Zn(2+) release.

Its subcellular location is the endoplasmic reticulum membrane. The protein localises to the golgi apparatus. It is found in the cis-Golgi network membrane. The enzyme catalyses Zn(2+)(in) = Zn(2+)(out). In terms of biological role, transports Zn(2+) from the endoplasmic reticulum (ER)/Golgi apparatus to the cytosol, playing an essential role in the regulation of cytosolic zinc levels. Acts as a gatekeeper of zinc release from intracellular stores, requiring post-translational activation by phosphorylation, resulting in activation of multiple downstream pathways leading to cell growth and proliferation. Has an essential role in B cell development and is required for proper B cell receptor signaling. Plays an important role in maintaining intestinal epithelial homeostasis and skin dermis development by regulating ER function. Controls cell signaling pathways involved in glucose metabolism in skeletal muscle. Has a protective role against ER stress in different biological contexts. Mediates Zn(2+)-induced ferroptosis. This chain is Zinc transporter SLC39A7, found in Pongo abelii (Sumatran orangutan).